The sequence spans 474 residues: tRNA-2-methylthio-N(6)-dimethylallyladenosine synthase (474 aa).

The MTTase N-terminal domain maps to 3–120 (QKLHIKTWGC…LPEMINQIRG (118 aa)). The [4Fe-4S] cluster site is built by Cys12, Cys49, Cys83, Cys157, Cys161, and Cys164. Positions 143 to 375 (KAEGPTAFVS…QQRINNQAAK (233 aa)) constitute a Radical SAM core domain. The region spanning 378–441 (RAMLGTEQRV…TNSLRGDVIR (64 aa)) is the TRAM domain.

It belongs to the methylthiotransferase family. MiaB subfamily. Monomer. The cofactor is [4Fe-4S] cluster.

The protein localises to the cytoplasm. It catalyses the reaction N(6)-dimethylallyladenosine(37) in tRNA + (sulfur carrier)-SH + AH2 + 2 S-adenosyl-L-methionine = 2-methylsulfanyl-N(6)-dimethylallyladenosine(37) in tRNA + (sulfur carrier)-H + 5'-deoxyadenosine + L-methionine + A + S-adenosyl-L-homocysteine + 2 H(+). In terms of biological role, catalyzes the methylthiolation of N6-(dimethylallyl)adenosine (i(6)A), leading to the formation of 2-methylthio-N6-(dimethylallyl)adenosine (ms(2)i(6)A) at position 37 in tRNAs that read codons beginning with uridine. This chain is tRNA-2-methylthio-N(6)-dimethylallyladenosine synthase, found in Actinobacillus succinogenes (strain ATCC 55618 / DSM 22257 / CCUG 43843 / 130Z).